A 159-amino-acid polypeptide reads, in one-letter code: Small ribosomal subunit protein uS17y (159 aa).

This sequence belongs to the universal ribosomal protein uS17 family.

It localises to the cytoplasm. The chain is Small ribosomal subunit protein uS17y (RPS11B) from Arabidopsis thaliana (Mouse-ear cress).